The sequence spans 864 residues: Leucine--tRNA ligase (864 aa).

A 'HIGH' region motif is present at residues Pro50 to His60. The 'KMSKS' region signature appears at Lys622–Ser626. Residue Lys625 coordinates ATP.

It belongs to the class-I aminoacyl-tRNA synthetase family.

Its subcellular location is the cytoplasm. It carries out the reaction tRNA(Leu) + L-leucine + ATP = L-leucyl-tRNA(Leu) + AMP + diphosphate. This is Leucine--tRNA ligase from Acidiphilium cryptum (strain JF-5).